A 343-amino-acid chain; its full sequence is RNA-binding protein 43 (343 aa).

Positions R15 to E90 constitute an RRM domain. The disordered stretch occupies residues R170–A200. Positions K184–T194 are enriched in polar residues.

The sequence is that of RNA-binding protein 43 (Rbm43) from Rattus norvegicus (Rat).